A 301-amino-acid polypeptide reads, in one-letter code: NADH-cytochrome b5 reductase 3 (301 aa).

Glycine 2 is lipidated: N-myristoyl glycine. Residues 40–152 (DIKYSLRLID…RGPNGLLVYQ (113 aa)) form the FAD-binding FR-type domain. Lysine 42 is subject to N6-acetyllysine. Tyrosine 43 carries the post-translational modification Phosphotyrosine. Positions 92, 93, 94, 109, 111, and 114 each coordinate FAD. Position 120 is an N6-acetyllysine (lysine 120). The FAD site is built by lysine 126, methionine 127, serine 128, and threonine 185.

The protein belongs to the flavoprotein pyridine nucleotide cytochrome reductase family. As to quaternary structure, component of a complex composed of cytochrome b5, NADH-cytochrome b5 reductase (CYB5R3) and MTARC2. Interacts with MTLN; the interaction is required to maintain cellular lipid composition and leads to stimulation of mitochondrial respiratory complex I activity. The cofactor is FAD.

The protein resides in the endoplasmic reticulum membrane. Its subcellular location is the mitochondrion outer membrane. The catalysed reaction is 2 Fe(III)-[cytochrome b5] + NADH = 2 Fe(II)-[cytochrome b5] + NAD(+) + H(+). Functionally, catalyzes the reduction of two molecules of cytochrome b5 using NADH as the electron donor. This chain is NADH-cytochrome b5 reductase 3 (CYB5R3), found in Macaca fascicularis (Crab-eating macaque).